A 394-amino-acid chain; its full sequence is Protein TsgA homolog (394 aa).

The next 12 membrane-spanning stretches (helical) occupy residues 11-31 (WISY…GIVM), 51-71 (FLNA…EIIP), 76-96 (LVFG…GHNL), 101-121 (ISMF…TFLV), 134-154 (LLFT…AAAM), 162-182 (WYWV…LTLC), 206-226 (VGVL…LGFI), 246-266 (QLVS…SFIL), 274-294 (IVTV…STDN), 302-322 (ILAL…LGSL), 334-354 (FILT…GPIV), and 363-383 (LETA…LGFF).

It belongs to the major facilitator superfamily. TsgA family.

Its subcellular location is the cell inner membrane. This Yersinia pestis bv. Antiqua (strain Antiqua) protein is Protein TsgA homolog.